The chain runs to 613 residues: MIEVLLVTICFTVFPYQGSSIILESGNVNDYEVVYPQKVPALPKGGVQNPQPETKYEDTMQYEFHVNGEPVVLHLERNKGLFSEDYTETHYAPDGREITTSPPVQDHCYYHGYIQNEADSSAAISACDGLKGHFKHRGETYFIEPLKLSNSESHAIYKDEHVEKEDEIPKICGVTQTTSESDEPIEKISQLTNTPEQDRYLQVKKYIELYVVVDNRMYRNYNSNRDAINERVYEMVNTLNVMYRPLNFFIALIGLEIWSNQDEINIEPEVAVTLRSFGEWRNTTLLPRKRNDNAQLLTGIDFNGATVGLAYVGTLCSPTQSVAVIQDHSKRTSMVASTMAHELGHNLGINHDSASCNCNAGPCIMSATISNQPFSKFSSCSVQEHQRYLLRVRPQCILNKPLSTDIVTPPVCGNYFVERGEECDCGSPQDCQSACCNATTCKPQHEAQCDSGECCEKCKFKKAGAECRAAKDDCDLPESCTGQSAKCPTDSFQRNGHPCQNNEGYCYNGKCPIMTNQCIALGGPGVNVSPDECFTLKQNVPECGFCRIENGRKIPCAEKDKMCGKLLCEKGNATCICFPTTHDPDYGMVEPGTKCGDGKVCINRQCVDVQTAY.

Positions methionine 1–serine 20 are cleaved as a signal peptide. Residues isoleucine 21–leucine 191 constitute a propeptide that is removed on maturation. Residues lysine 205–proline 401 enclose the Peptidase M12B domain. Glutamate 208 provides a ligand contact to Ca(2+). Asparagine 282 carries N-linked (GlcNAc...) asparagine glycosylation. Aspartate 292 serves as a coordination point for Ca(2+). Disulfide bonds link cysteine 316/cysteine 396, cysteine 356/cysteine 380, and cysteine 358/cysteine 363. Residues histidine 341, histidine 345, and histidine 351 each contribute to the Zn(2+) site. Ca(2+) contacts are provided by cysteine 396, asparagine 399, asparagine 414, phenylalanine 416, glutamate 418, glutamate 421, and aspartate 424. Positions proline 409 to asparagine 495 constitute a Disintegrin domain. 15 disulfides stabilise this stretch: cysteine 412/cysteine 441, cysteine 423/cysteine 436, cysteine 425/cysteine 431, cysteine 435/cysteine 458, cysteine 449/cysteine 455, cysteine 454/cysteine 480, cysteine 467/cysteine 487, cysteine 474/cysteine 506, cysteine 499/cysteine 511, cysteine 518/cysteine 568, cysteine 533/cysteine 575, cysteine 543/cysteine 577, cysteine 546/cysteine 556, cysteine 563/cysteine 601, and cysteine 595/cysteine 606. N-linked (GlcNAc...) asparagine glycosylation occurs at asparagine 437. A D/ECD-tripeptide motif is present at residues aspartate 473–aspartate 475. Ca(2+) is bound by residues aspartate 475, leucine 476, glutamate 478, and aspartate 490. A hypervariable region that may play important roles toward cell migration region spans residues lysine 561–threonine 574. N-linked (GlcNAc...) asparagine glycosylation is present at asparagine 572.

This sequence belongs to the venom metalloproteinase (M12B) family. P-III subfamily. In terms of assembly, monomer. Requires Zn(2+) as cofactor. As to expression, expressed by the venom gland.

It localises to the secreted. Functionally, snake venom zinc metalloproteinase that may impair hemostasis in the prey. This chain is Zinc metalloproteinase-disintegrin-like MTP4, found in Drysdalia coronoides (White-lipped snake).